The chain runs to 985 residues: Invasin (985 aa).

A D1 region spans residues 494 to 594 (SVTVQQPQLT…RQSVDTHFVK (101 aa)). At 494–985 (SVTVQQPQLT…LAFPLCALAI (492 aa)) the chain is on the extracellular side. Big-1 domains follow at residues 503 to 594 (TLTA…HFVK) and 601 to 691 (KSTL…VNFT). Residues 595 to 694 (GTIAADKSTL…SVTVNFTADP (100 aa)) are D2. The D3 stretch occupies residues 695–794 (IPDAGRSSFT…LQKKISLFPV (100 aa)). Residues 795–886 (PTLTGILVNG…YSVSYRFYPN (92 aa)) are D4. The tract at residues 795–985 (PTLTGILVNG…LAFPLCALAI (191 aa)) is integrin-binding. The D5 stretch occupies residues 887 to 985 (RWIYDGGTSL…LAFPLCALAI (99 aa)). A disulfide bridge links Cys-906 with Cys-981.

It belongs to the intimin/invasin family.

It is found in the cell surface. Functionally, invasin is a protein that allows enteric bacteria to penetrate cultured mammalian cells. The entry of invasin in the cell is mediated by binding several beta-1 chain integrins. The chain is Invasin from Yersinia pseudotuberculosis serotype I (strain IP32953).